The following is a 69-amino-acid chain: Putative membrane protein insertion efficiency factor (69 aa).

It belongs to the UPF0161 family.

Its subcellular location is the cell inner membrane. Its function is as follows. Could be involved in insertion of integral membrane proteins into the membrane. This chain is Putative membrane protein insertion efficiency factor, found in Laribacter hongkongensis (strain HLHK9).